The following is a 154-amino-acid chain: Nitrogen regulatory protein (154 aa).

Positions 6–150 (QILTPGRSLV…EALYQIVVDV (145 aa)) constitute a PTS EIIA type-2 domain. His68 (tele-phosphohistidine intermediate) is an active-site residue.

It localises to the cytoplasm. In terms of biological role, seems to have a role in regulating nitrogen assimilation. This Pseudomonas aeruginosa (strain ATCC 15692 / DSM 22644 / CIP 104116 / JCM 14847 / LMG 12228 / 1C / PRS 101 / PAO1) protein is Nitrogen regulatory protein (ptsN).